Consider the following 370-residue polypeptide: Ubiquitin carboxyl-terminal hydrolase 12 (370 aa).

The Required for plasma membrane localization of USP12/WDR20 motif lies at 1–4; the sequence is MEIL. The region spanning 39–369 is the USP domain; that stretch reads FGLVNFGNTC…SGYILFYQSR (331 aa). Cysteine 48 (nucleophile) is an active-site residue. The tract at residues 145-169 is disordered; the sequence is KQEKQNGRLPNGNIDNENNNSTPDP. Polar residues predominate over residues 157-168; it reads NIDNENNNSTPD. Residues cysteine 186, cysteine 189, cysteine 233, and cysteine 236 each contribute to the Zn(2+) site. The Proton acceptor role is filled by histidine 317.

The protein belongs to the peptidase C19 family. USP12/USP46 subfamily. Interacts with WDR48. Interacts with WDR20; this interaction promotes translocation of the USP12 complex to the plasma membrane. Component of the USP12-WDR20-WDR48 deubiquitinating complex. Component of the USP12-DMWD-WDR48 deubiquitinating complex. Interacts with PHLPP1. Interacts with RBPJ. Interacts with CBP; this interaction blocks the acetyltransferase activity of CREBBP. Interacts with ITCH; the interaction is more efficient when both USP12 and WDR48/UAF1 are involved and may mediate recruitment of the USP12 deubiquitinating complex to Notch. Interacts with OPTN and SQSTM1/p62; the interaction is independent of deubiquitinase activity and may be involved in regulation of autophagic flux. As to quaternary structure, (Microbial infection) Interacts with Epstein-Barr virus protein EBNA3.

The protein localises to the nucleus. It localises to the cytoplasm. The protein resides in the cell membrane. It catalyses the reaction Thiol-dependent hydrolysis of ester, thioester, amide, peptide and isopeptide bonds formed by the C-terminal Gly of ubiquitin (a 76-residue protein attached to proteins as an intracellular targeting signal).. With respect to regulation, activated by interaction with WDR20, WDR48 and DMWD through different allosteric mechanisms. Deubiquitinating enzyme that plays various roles in the regulation of the immune response and inflammation. During TCR engagement and activation, translocates into the cytoplasm and deubiquitinates its substrates LAT and TRAT1 and prevents their lysosome-dependent degradation to stabilize the TCR signaling complex at the plasma membrane. Plays an essential role in the selective LPS-induced macrophage response through the activation of NF-kappa-B pathway. In addition, promotes that antiviral immune response through targeting DNA sensor IFI16 to inhibit its proteasome-dependent degradation. Participates in the interferon signaling pathway and antiviral response independently of its deubiquitinase activity by maintaining nuclear phosphorylated STAT1 levels via inhibition of its CREBBP-mediated acetylation and subsequent dephosphorylation. Plays an intrinsic role in promoting the differentiation, activation and proliferation of CD4(+) T-cell by activating the NF-kappa-B signaling pathway through deubiquitinating and stabilizing B-cell lymphoma/leukemia 10/BCL10. In myeloid-derived suppressor cells promotes the activation of the NF-kappa-B via deubiquitination and stabilization of RELA. Regulates the 'Lys-63'-linked polyubiquitin chains of BAX and thereby modulates the mitochondrial apoptotic process. Negative regulator of NOTCH signaling that specifically deubiquitinates non-activated NOTCH receptors to target them for lysosomal degradation; deubiquitination of NOTCH stimulates its transport form late endosomes to lysosomes. Protects neurons against HTT/huntingtin-induced polyglutamine expansion-dependent neurodegeneration through regulation of autophagic flux. This function is independent of deubiquitinase activity or of other components of the USP12-WDR20-WDR48 deubiquitinating complex. In complex with WDR48, acts as a potential tumor suppressor by positively regulating PHLPP1 stability. Functionally, (Microbial infection) Forms a complex with Epstein-Barr virus protein EBNA3 which is an active deubiquitinase activity that may select specific substrates to promote B-lymphocyte transformation. This Homo sapiens (Human) protein is Ubiquitin carboxyl-terminal hydrolase 12 (USP12).